Reading from the N-terminus, the 276-residue chain is NADPH-dependent 7-cyano-7-deazaguanine reductase (276 aa).

80–82 lines the substrate pocket; that stretch reads VES. 82–83 contributes to the NADPH binding site; that stretch reads SK. C183 functions as the Thioimide intermediate in the catalytic mechanism. The Proton donor role is filled by D190. Residue 222–223 participates in substrate binding; it reads HE. 251–252 is an NADPH binding site; that stretch reads RG.

This sequence belongs to the GTP cyclohydrolase I family. QueF type 2 subfamily. As to quaternary structure, homodimer.

It is found in the cytoplasm. The catalysed reaction is 7-aminomethyl-7-carbaguanine + 2 NADP(+) = 7-cyano-7-deazaguanine + 2 NADPH + 3 H(+). Its pathway is tRNA modification; tRNA-queuosine biosynthesis. In terms of biological role, catalyzes the NADPH-dependent reduction of 7-cyano-7-deazaguanine (preQ0) to 7-aminomethyl-7-deazaguanine (preQ1). This chain is NADPH-dependent 7-cyano-7-deazaguanine reductase, found in Burkholderia cenocepacia (strain HI2424).